Here is a 286-residue protein sequence, read N- to C-terminus: Eukaryotic translation initiation factor 3 subunit F-2 (286 aa).

The region spanning 11–147 is the MPN domain; it reads ILLQPLVLLH…MRLYTAVVMG (137 aa).

The protein belongs to the eIF-3 subunit F family. As to quaternary structure, component of the eukaryotic translation initiation factor 3 (eIF-3) complex. The eIF-3 complex interacts with pix.

It is found in the cytoplasm. Functionally, component of the eukaryotic translation initiation factor 3 (eIF-3) complex, which is involved in protein synthesis of a specialized repertoire of mRNAs and, together with other initiation factors, stimulates binding of mRNA and methionyl-tRNAi to the 40S ribosome. The eIF-3 complex specifically targets and initiates translation of a subset of mRNAs involved in cell proliferation. The chain is Eukaryotic translation initiation factor 3 subunit F-2 from Drosophila willistoni (Fruit fly).